Consider the following 32-residue polypeptide: Hemocyanin C chain (32 aa).

Belongs to the tyrosinase family. Hemocyanin subfamily. Hemolymph.

The protein localises to the secreted. It is found in the extracellular space. In terms of biological role, hemocyanins are copper-containing oxygen carriers occurring freely dissolved in the hemolymph of many mollusks and arthropods. In Cherax destructor (Common yabby crayfish), this protein is Hemocyanin C chain.